A 558-amino-acid chain; its full sequence is N-acetylglucosamine-6-O-sulfatase (558 aa).

At S101 the chain carries 3-oxoalanine (Ser).

Belongs to the sulfatase family. In terms of processing, the conversion to 3-oxoalanine (also known as C-formylglycine, FGly), of a serine or cysteine residue in prokaryotes and of a cysteine residue in eukaryotes, is critical for catalytic activity.

In terms of biological role, exosulfatase involved in the degradation of the glycosaminoglycan (GAG) heparan sulfate (HS). Catalyzes the hydrolysis of the 6-sulfate groups of the N-acetyl-D-glucosamine 6-sulfate units. GAG-specific sulfatases play a key role in the persistence of the major human gut symbiont B.thetaiotaomicron in the host gastrointestinal tract. The polypeptide is N-acetylglucosamine-6-O-sulfatase (Bacteroides thetaiotaomicron (strain ATCC 29148 / DSM 2079 / JCM 5827 / CCUG 10774 / NCTC 10582 / VPI-5482 / E50)).